Here is a 362-residue protein sequence, read N- to C-terminus: Fe-S cluster assembly protein DRE2 (362 aa).

The segment at 1-28 (MAPGLDLTPDFHPPTTTTTTTNNAPPQQ) is disordered. Residues 15–28 (TTTTTTTNNAPPQQ) show a composition bias toward low complexity. Residues 24-165 (APPQQRTLLL…KPEYAEEEAV (142 aa)) are N-terminal SAM-like domain. The tract at residues 166–254 (PLRFGKKKAA…EETLLTEEDL (89 aa)) is linker. [2Fe-2S] cluster is bound by residues cysteine 264, cysteine 275, cysteine 278, and cysteine 280. A fe-S binding site A region spans residues 264–280 (CQPQPGKKRRACKDCTC). [4Fe-4S] cluster is bound by residues cysteine 325, cysteine 328, cysteine 336, and cysteine 339. 2 short sequence motifs (cx2C motif) span residues 325 to 328 (CGSC) and 336 to 339 (CSDC). A fe-S binding site B region spans residues 325–339 (CGSCYLGDAFRCSDC).

This sequence belongs to the anamorsin family. In terms of assembly, monomer. Interacts with TAH18. Interacts with MIA40. The cofactor is [2Fe-2S] cluster. It depends on [4Fe-4S] cluster as a cofactor.

The protein localises to the cytoplasm. The protein resides in the mitochondrion intermembrane space. Component of the cytosolic iron-sulfur (Fe-S) protein assembly (CIA) machinery required for the maturation of extramitochondrial Fe-S proteins. Part of an electron transfer chain functioning in an early step of cytosolic Fe-S biogenesis, facilitating the de novo assembly of a [4Fe-4S] cluster on the scaffold complex CFD1-NBP35. Electrons are transferred to DRE2 from NADPH via the FAD- and FMN-containing protein TAH18. TAH18-DRE2 are also required for the assembly of the diferric tyrosyl radical cofactor of ribonucleotide reductase (RNR), probably by providing electrons for reduction during radical cofactor maturation in the catalytic small subunit RNR2. This chain is Fe-S cluster assembly protein DRE2, found in Chaetomium globosum (strain ATCC 6205 / CBS 148.51 / DSM 1962 / NBRC 6347 / NRRL 1970) (Soil fungus).